We begin with the raw amino-acid sequence, 664 residues long: Cyclic nucleotide-gated channel alpha-2 (664 aa).

The segment covering 1–10 (MMTEKSNGVK) has biased composition (polar residues). Positions 1 to 61 (MMTEKSNGVK…LQRLAEMDTP (61 aa)) are disordered. Over 1–146 (MMTEKSNGVK…PAGDWYYRWL (146 aa)) the chain is Cytoplasmic. Residues 147–168 (FVIAMPVLYNWCLLVARACFSD) form a helical membrane-spanning segment. Over 169-178 (LQRNYFVVWL) the chain is Extracellular. A helical membrane pass occupies residues 179 to 199 (VLDYFSDTVYIADLIIRLRTG). Residues 200 to 224 (FLEQGLLVKDPKKLRDNYIHTLQFK) are Cytoplasmic-facing. A helical membrane pass occupies residues 225–243 (LDVASIIPTDLIYFAVGIH). Over 244 to 248 (SPEVR) the chain is Extracellular. Residues 249–267 (FNRLLHFARMFEFFDRTET) form a helical membrane-spanning segment. Topologically, residues 268–274 (RTSYPNI) are cytoplasmic. Positions 272-380 (PNIFRISNLV…GNVGSMISNM (109 aa)) are ion conduction pathway. A helical transmembrane segment spans residues 275–298 (FRISNLVLYILVIIHWNACIYYAI). The Extracellular portion of the chain corresponds to 299–321 (SKSIGFGVDTWVYPNITDPEYGY). A run of 2 helical transmembrane segments spans residues 322-356 (LARE…LFVI) and 357-381 (FDFL…SNMN). Residues 339 to 342 (TIGE) are selectivity filter. Residues 382-458 (ATRAEFQAKI…STLKKVRIFQ (77 aa)) form a C-linker region. The Cytoplasmic portion of the chain corresponds to 382-664 (ATRAEFQAKI…INTPEPAVAE (283 aa)). The cyclic nucleotide-binding domain stretch occupies residues 462–582 (AGLLVELVLK…EERGREILMK (121 aa)). 3',5'-cyclic GMP contacts are provided by G522, S525, R538, and T539. 3',5'-cyclic AMP contacts are provided by R538 and T539. The stretch at 599 to 653 (VQEKLEQLETNMETLYTRFARLLAEYTGAQQKLKQRITVLETKMKQNHEDDYLSD) forms a coiled coil.

Belongs to the cyclic nucleotide-gated cation channel (TC 1.A.1.5) family. CNGA2 subfamily. In terms of assembly, the olfactory cyclic nucleotide-gated channel is an heterotetramer composed of CNGA2, CNGA4 and CNGB1b subunits with 2:1:1 stoichiometry.

The protein resides in the cell projection. The protein localises to the cilium membrane. It catalyses the reaction Ca(2+)(in) = Ca(2+)(out). The enzyme catalyses Na(+)(in) = Na(+)(out). The catalysed reaction is K(+)(in) = K(+)(out). It carries out the reaction NH4(+)(in) = NH4(+)(out). It catalyses the reaction Rb(+)(in) = Rb(+)(out). The enzyme catalyses Li(+)(in) = Li(+)(out). The catalysed reaction is Cs(+)(in) = Cs(+)(out). In terms of biological role, pore-forming subunit of the olfactory cyclic nucleotide-gated channel. Operates in the cilia of olfactory sensory neurons where chemical stimulation of the odorant is converted to an electrical signal. Mediates odorant-induced cAMP-dependent Ca(2+) influx triggering neuron depolarization. The rise of intracellular Ca(2+) levels potentiates the olfactory response by activating Ca(2+)-dependent Cl(-) channels, but it also serves as a negative feedback signal to desensitize the channel for rapid adaptation to odorants. Conducts cAMP- and cGMP-gated ion currents, with permeability for monovalent and divalent cations. This is Cyclic nucleotide-gated channel alpha-2 from Mus musculus (Mouse).